Consider the following 334-residue polypeptide: uncharacterized protein (334 aa).

Transmembrane regions (helical) follow at residues 1–21 (MFRL…FTFI) and 46–66 (ILGL…IIII).

The protein resides in the cell membrane. This is an uncharacterized protein from Rickettsia prowazekii (strain Madrid E).